Here is a 214-residue protein sequence, read N- to C-terminus: Octanoyltransferase (214 aa).

In terms of domain architecture, BPL/LPL catalytic spans 31-206 (KDDADEIWLL…QLAEQLGYNY (176 aa)). Substrate is bound by residues 70–77 (RGGQVTYH), 137–139 (SLG), and 150–152 (GLA). Catalysis depends on Cys-168, which acts as the Acyl-thioester intermediate.

This sequence belongs to the LipB family.

It is found in the cytoplasm. It carries out the reaction octanoyl-[ACP] + L-lysyl-[protein] = N(6)-octanoyl-L-lysyl-[protein] + holo-[ACP] + H(+). It functions in the pathway protein modification; protein lipoylation via endogenous pathway; protein N(6)-(lipoyl)lysine from octanoyl-[acyl-carrier-protein]: step 1/2. Functionally, catalyzes the transfer of endogenously produced octanoic acid from octanoyl-acyl-carrier-protein onto the lipoyl domains of lipoate-dependent enzymes. Lipoyl-ACP can also act as a substrate although octanoyl-ACP is likely to be the physiological substrate. The chain is Octanoyltransferase from Marinomonas sp. (strain MWYL1).